Here is a 302-residue protein sequence, read N- to C-terminus: uncharacterized protein (302 aa).

The N-terminal stretch at 1-22 (MLVVFKRLGFIVSIFSLTFLSA) is a signal peptide. The N-palmitoyl cysteine moiety is linked to residue Cys23. Residue Cys23 is the site of S-diacylglycerol cysteine attachment.

Belongs to the MG067/MG068/MG395 family.

The protein localises to the cell membrane. This is an uncharacterized protein from Mycoplasma pneumoniae (strain ATCC 29342 / M129 / Subtype 1) (Mycoplasmoides pneumoniae).